Reading from the N-terminus, the 494-residue chain is Neuronal acetylcholine receptor subunit alpha-6 (494 aa).

The N-terminal stretch at 1–30 (MLNSRDQGNLHSGLCLWLCGFLALFKGSTG) is a signal peptide. The Extracellular portion of the chain corresponds to 31-240 (CESEEQLFHR…TYSFYIRRLP (210 aa)). N-linked (GlcNAc...) asparagine glycans are attached at residues Asn54 and Asn171. 2 disulfides stabilise this stretch: Cys158/Cys172 and Cys222/Cys223. The next 3 helical transmembrane spans lie at 241-265 (MFYTINLIIPCLFISFLTVLVFYLP), 272-290 (VTLCISVLLSLTVFLLVIT), and 306-327 (YLLFTMIFVTLSIVVTVFVLNI). The Cytoplasmic portion of the chain corresponds to 328 to 465 (HYRTPATHTM…WKYMAMVVDR (138 aa)). The segment at 399-423 (QKSSDIAPGKRRSSQQPARWVAENS) is disordered. Ser401 carries the phosphoserine modification. The helical transmembrane segment at 466 to 485 (VFLWVFIIVCVFGTVGLFLQ) threads the bilayer.

It belongs to the ligand-gated ion channel (TC 1.A.9) family. Acetylcholine receptor (TC 1.A.9.1) subfamily. Alpha-6/CHRNA6 sub-subfamily. As to quaternary structure, neuronal AChR is composed of two different types of subunits: alpha and non-alpha (beta). CHRNA6/alpha-6 subunit can be combined to CHRNB2/beta-2 and CHRNA4/alpha-4 to give rise to functional receptors. Interacts with LYPD6. In terms of tissue distribution, predominantly expressed in only a few brain areas, including dopaminergic neurons, norepirephrine neurons and cells of the visual system.

It is found in the synaptic cell membrane. It carries out the reaction K(+)(in) = K(+)(out). The enzyme catalyses Na(+)(in) = Na(+)(out). The catalysed reaction is Ca(2+)(in) = Ca(2+)(out). Its activity is regulated as follows. Activated by a myriad of ligands such as acetylcholine, cytisine and nicotine. CHRNA6 nAChR activity is inhibited by the antagonists alpha-conotoxin MII and PIA, a small disulfide-constrained peptides from cone snails. In terms of biological role, component of neuronal acetylcholine receptors (nAChRs) that function as pentameric, ligand-gated cation channels with high calcium permeability among other activities. nAChRs are excitatory neurotrasnmitter receptors formed by a collection of nAChR subunits known to mediate synaptic transmission in the nervous system and the neuromuscular junction. Each nAchR subunit confers differential attributes to channel properties, including activation, deactivation and desensitization kinetics, pH sensitivity, cation permeability, and binding to allosteric modulators. CHRNA6 forms pentameric channels with CHRNB2 and CHRNA4 that exhibit high sensitivity to ACh and nicotine and are predominantly expressed in only a few brain areas, including dopaminergic neurons, norepirephrine neurons and cells of the visual system. nAChrs containing CHRNA6 subunits mediate endogenous cholinergic modulation of dopamine and gamma-aminobutyric acid (GABA) release in response to nicotine at nerve terminals. The protein is Neuronal acetylcholine receptor subunit alpha-6 (Chrna6) of Mus musculus (Mouse).